We begin with the raw amino-acid sequence, 880 residues long: Leucine-rich repeat-containing protein 66 (880 aa).

The chain crosses the membrane as a helical span at residues 4-24 (LYFRVITIVIGLYFTGIMTNA). N-linked (GlcNAc...) asparagine glycosylation is present at Asn-45. LRR repeat units lie at residues 86-107 (KIKHLDLSNNLISKITLSPFAY), 110-130 (ALEVLNLSNNAIHSLSLDLLS), 149-171 (LLKVLILQRNKLSDTPKGLWKLK), 172-193 (SLQSLDLSFNGILQIGWSDFHN), 196-217 (QLENLCLKSNKIFKIPPQAFKD), and 220-241 (KLQVIDLSNNALITILPMMIIA). Asn-115 is a glycosylation site (N-linked (GlcNAc...) asparagine). A disordered region spans residues 319–368 (SKAERPQGGRHTGISTLGKKAKAGSGLRKKQRRLPRSVRSTRDVQAAGKK). The span at 337 to 354 (KKAKAGSGLRKKQRRLPR) shows a compositional bias: basic residues. A helical membrane pass occupies residues 376–396 (ALAVCLSVFITFLVAFSLGAF). Disordered regions lie at residues 463–504 (PHPH…NDGA) and 679–746 (VTPA…SKDN). Residues 483–493 (GSSQSPGQCGD) are compositionally biased toward polar residues. Positions 697–707 (CELESDCDSDE) are enriched in acidic residues. Low complexity predominate over residues 709-720 (SLFTLSSISSES). Ser-723 carries the phosphoserine modification. Residues 737–746 (DESSGASKDN) show a composition bias toward polar residues. Asn-746 is a glycosylation site (N-linked (GlcNAc...) asparagine). The residue at position 752 (Ser-752) is a Phosphoserine. A glycan (N-linked (GlcNAc...) asparagine) is linked at Asn-756. Disordered regions lie at residues 764 to 816 (GKCK…PLGD) and 855 to 880 (TPPCSAEVPSDPDKAAFHERDSDILK). Composition is skewed to basic and acidic residues over residues 788–800 (THLENASDTDRSE) and 865–880 (DPDKAAFHERDSDILK).

The protein localises to the membrane. In Homo sapiens (Human), this protein is Leucine-rich repeat-containing protein 66 (LRRC66).